Here is a 311-residue protein sequence, read N- to C-terminus: L-lactate dehydrogenase 2 (311 aa).

NAD(+) contacts are provided by valine 14, aspartate 35, and arginine 40. Substrate is bound by residues arginine 90 and 122 to 125 (NPCD). NAD(+) is bound by residues 120–122 (ATN) and threonine 145. 150 to 153 (DTTR) contributes to the substrate binding site. The active-site Proton acceptor is the histidine 177. Threonine 230 lines the substrate pocket.

It belongs to the LDH/MDH superfamily. LDH family. In terms of assembly, homotetramer.

The protein resides in the cytoplasm. It carries out the reaction (S)-lactate + NAD(+) = pyruvate + NADH + H(+). It functions in the pathway fermentation; pyruvate fermentation to lactate; (S)-lactate from pyruvate: step 1/1. Functionally, catalyzes the conversion of lactate to pyruvate. This Listeria monocytogenes serovar 1/2a (strain ATCC BAA-679 / EGD-e) protein is L-lactate dehydrogenase 2.